The sequence spans 131 residues: D-ribose pyranase (131 aa).

Histidine 20 functions as the Proton donor in the catalytic mechanism. Residues aspartate 28, histidine 98, and 120 to 122 (YAN) each bind substrate.

The protein belongs to the RbsD / FucU family. RbsD subfamily. In terms of assembly, homodecamer.

The protein resides in the cytoplasm. The enzyme catalyses beta-D-ribopyranose = beta-D-ribofuranose. It functions in the pathway carbohydrate metabolism; D-ribose degradation; D-ribose 5-phosphate from beta-D-ribopyranose: step 1/2. Catalyzes the interconversion of beta-pyran and beta-furan forms of D-ribose. In Enterococcus faecalis (strain ATCC 700802 / V583), this protein is D-ribose pyranase.